Reading from the N-terminus, the 515-residue chain is MQLNPAEISDLIKAKIENLSVNAEVRTRGTVVSVTDGIVRIHGLSDAMQGEMLEFPGNTFGLAMNLERDSVGAVVLGEYEHIKEGDTVTCTGRILEVPVGRELVGRVVDALGRPIDGKGPINTTLTAPIEKIAPGVIARKSVDQPMQTGLKAIDSMVPVGRGQRELIIGDRQTGKTAVALDAIVNQKGTGVICIYVAIGQKASSIANVVRKLEEHGAMEHTIVVAATASEAAALQYIAPYSGCTMGEFFRDRGEDALIVYDDLSKQAVAYRQISLLLRRPPGREAYPGDVFYLHSRLLERAARVNEHEVEKLTNGEVKGKTGSLTALPIIETQAGDVSAFVPTNVISITDGQIFLETDLFNAGIRPAINAGISVSRVGGAAQTKVIKKLGGGIRLALAQYRELAAFSQFASDLDEATRKQLEHGEVVTELMKQKQFSTLNTAEMALTLWAINNGSYSDVPVAKALAFESEFLSFVRTQHPEVLEAVNASGAMSDESEKTLEAAMKSFKSSYAYQA.

169–176 (GDRQTGKT) is a binding site for ATP.

It belongs to the ATPase alpha/beta chains family. As to quaternary structure, F-type ATPases have 2 components, CF(1) - the catalytic core - and CF(0) - the membrane proton channel. CF(1) has five subunits: alpha(3), beta(3), gamma(1), delta(1), epsilon(1). CF(0) has three main subunits: a(1), b(2) and c(9-12). The alpha and beta chains form an alternating ring which encloses part of the gamma chain. CF(1) is attached to CF(0) by a central stalk formed by the gamma and epsilon chains, while a peripheral stalk is formed by the delta and b chains.

It localises to the cell inner membrane. It carries out the reaction ATP + H2O + 4 H(+)(in) = ADP + phosphate + 5 H(+)(out). In terms of biological role, produces ATP from ADP in the presence of a proton gradient across the membrane. The alpha chain is a regulatory subunit. This chain is ATP synthase subunit alpha, found in Neisseria meningitidis serogroup C / serotype 2a (strain ATCC 700532 / DSM 15464 / FAM18).